The following is a 371-amino-acid chain: Glutamate 5-kinase (371 aa).

Residue Lys14 coordinates ATP. 3 residues coordinate substrate: Ser54, Asp141, and Asn153. Residue 173 to 174 coordinates ATP; it reads TD. The PUA domain occupies 280 to 357; sequence AGSLIVDAGA…SDIEQLLGYI (78 aa).

Belongs to the glutamate 5-kinase family.

It is found in the cytoplasm. The enzyme catalyses L-glutamate + ATP = L-glutamyl 5-phosphate + ADP. Its pathway is amino-acid biosynthesis; L-proline biosynthesis; L-glutamate 5-semialdehyde from L-glutamate: step 1/2. Catalyzes the transfer of a phosphate group to glutamate to form L-glutamate 5-phosphate. The chain is Glutamate 5-kinase from Azoarcus sp. (strain BH72).